Here is an 89-residue protein sequence, read N- to C-terminus: Small ribosomal subunit protein uS15 (89 aa).

It belongs to the universal ribosomal protein uS15 family. Part of the 30S ribosomal subunit. Forms a bridge to the 50S subunit in the 70S ribosome, contacting the 23S rRNA.

Functionally, one of the primary rRNA binding proteins, it binds directly to 16S rRNA where it helps nucleate assembly of the platform of the 30S subunit by binding and bridging several RNA helices of the 16S rRNA. In terms of biological role, forms an intersubunit bridge (bridge B4) with the 23S rRNA of the 50S subunit in the ribosome. In Solibacter usitatus (strain Ellin6076), this protein is Small ribosomal subunit protein uS15.